Reading from the N-terminus, the 351-residue chain is Minor outer capsid protein P9 (351 aa).

The interval 246–308 (GVPAALPQPD…KAVPSGNVSA (63 aa)) is disordered. Basic and acidic residues predominate over residues 285-297 (MIRKKVETSKDAP).

It belongs to the phytoreovirus minor outer capsid protein P9 family.

It localises to the virion. Its subcellular location is the host cytoplasm. Its function is as follows. Minor outer capsid protein. The chain is Minor outer capsid protein P9 from Rice dwarf virus (isolate O) (RDV).